The sequence spans 559 residues: 2,3-bisphosphoglycerate-independent phosphoglycerate mutase (559 aa).

Positions 28 and 81 each coordinate Mn(2+). Residue Ser81 is the Phosphoserine intermediate of the active site. Residues His140, 170 to 171 (RD), Arg206, Arg213, 286 to 289 (RADR), and Lys361 contribute to the substrate site. Positions 430, 434, 471, 472, and 501 each coordinate Mn(2+).

This sequence belongs to the BPG-independent phosphoglycerate mutase family. Monomer. It depends on Mn(2+) as a cofactor. As to expression, found ubiquitously in germinating seed.

The protein resides in the cytoplasm. The catalysed reaction is (2R)-2-phosphoglycerate = (2R)-3-phosphoglycerate. Its pathway is carbohydrate degradation; glycolysis; pyruvate from D-glyceraldehyde 3-phosphate: step 3/5. Its function is as follows. Catalyzes the interconversion of 2-phosphoglycerate and 3-phosphoglycerate. This Nicotiana tabacum (Common tobacco) protein is 2,3-bisphosphoglycerate-independent phosphoglycerate mutase.